The following is a 144-amino-acid chain: 3-hydroxyacyl-[acyl-carrier-protein] dehydratase FabZ (144 aa).

Residue histidine 48 is part of the active site.

The protein belongs to the thioester dehydratase family. FabZ subfamily.

The protein resides in the cytoplasm. The catalysed reaction is a (3R)-hydroxyacyl-[ACP] = a (2E)-enoyl-[ACP] + H2O. Its function is as follows. Involved in unsaturated fatty acids biosynthesis. Catalyzes the dehydration of short chain beta-hydroxyacyl-ACPs and long chain saturated and unsaturated beta-hydroxyacyl-ACPs. In Bacillus thuringiensis (strain Al Hakam), this protein is 3-hydroxyacyl-[acyl-carrier-protein] dehydratase FabZ.